A 429-amino-acid polypeptide reads, in one-letter code: Serine hydroxymethyltransferase (429 aa).

(6S)-5,6,7,8-tetrahydrofolate-binding positions include L126 and 130–132; that span reads GHL. Residue K235 is modified to N6-(pyridoxal phosphate)lysine. Residue 359-361 participates in (6S)-5,6,7,8-tetrahydrofolate binding; the sequence is SPF.

This sequence belongs to the SHMT family. Homodimer. The cofactor is pyridoxal 5'-phosphate.

It localises to the cytoplasm. The enzyme catalyses (6R)-5,10-methylene-5,6,7,8-tetrahydrofolate + glycine + H2O = (6S)-5,6,7,8-tetrahydrofolate + L-serine. It functions in the pathway one-carbon metabolism; tetrahydrofolate interconversion. Its pathway is amino-acid biosynthesis; glycine biosynthesis; glycine from L-serine: step 1/1. Its function is as follows. Catalyzes the reversible interconversion of serine and glycine with tetrahydrofolate (THF) serving as the one-carbon carrier. This reaction serves as the major source of one-carbon groups required for the biosynthesis of purines, thymidylate, methionine, and other important biomolecules. Also exhibits THF-independent aldolase activity toward beta-hydroxyamino acids, producing glycine and aldehydes, via a retro-aldol mechanism. This chain is Serine hydroxymethyltransferase, found in Parasynechococcus marenigrum (strain WH8102).